A 392-amino-acid chain; its full sequence is Y' element ATP-dependent helicase YFL066C (392 aa).

One can recognise a Helicase ATP-binding domain in the interval 1-175 (MADTPSVAVQ…LQRIGLTGLA (175 aa)). 11–18 (APPGYGKT) is an ATP binding site. Residues 232–381 (KLLLALFEIE…EFYGLESKKG (150 aa)) enclose the Helicase C-terminal domain.

It belongs to the helicase family. Yeast subtelomeric Y' repeat subfamily.

In terms of biological role, catalyzes DNA unwinding and is involved in telomerase-independent telomere maintenance. This chain is Y' element ATP-dependent helicase YFL066C, found in Saccharomyces cerevisiae (strain ATCC 204508 / S288c) (Baker's yeast).